The following is a 278-amino-acid chain: Large ribosomal subunit protein uL2 (278 aa).

2 disordered regions span residues 28-58 and 223-278; these read TPEK…GGGH and GVVM…KNKR. Residues 43–53 show a composition bias toward polar residues; it reads RNNQGRITTRH. The span at 268–278 shows a compositional bias: basic residues; it reads IRRRKTGKNKR.

It belongs to the universal ribosomal protein uL2 family. Part of the 50S ribosomal subunit. Forms a bridge to the 30S subunit in the 70S ribosome.

One of the primary rRNA binding proteins. Required for association of the 30S and 50S subunits to form the 70S ribosome, for tRNA binding and peptide bond formation. It has been suggested to have peptidyltransferase activity; this is somewhat controversial. Makes several contacts with the 16S rRNA in the 70S ribosome. This Nocardioides sp. (strain ATCC BAA-499 / JS614) protein is Large ribosomal subunit protein uL2.